Here is a 489-residue protein sequence, read N- to C-terminus: Acetyl-coenzyme A carboxylase carboxyl transferase subunit beta, chloroplastic (489 aa).

One can recognise a CoA carboxyltransferase N-terminal domain in the interval L225–K489. Zn(2+) is bound by residues C229, C232, C245, and C248. A C4-type zinc finger spans residues C229 to C248.

Belongs to the AccD/PCCB family. In terms of assembly, acetyl-CoA carboxylase is a heterohexamer composed of biotin carboxyl carrier protein, biotin carboxylase and 2 subunits each of ACCase subunit alpha and ACCase plastid-coded subunit beta (accD). Zn(2+) is required as a cofactor.

It localises to the plastid. Its subcellular location is the chloroplast stroma. The enzyme catalyses N(6)-carboxybiotinyl-L-lysyl-[protein] + acetyl-CoA = N(6)-biotinyl-L-lysyl-[protein] + malonyl-CoA. It participates in lipid metabolism; malonyl-CoA biosynthesis; malonyl-CoA from acetyl-CoA: step 1/1. Component of the acetyl coenzyme A carboxylase (ACC) complex. Biotin carboxylase (BC) catalyzes the carboxylation of biotin on its carrier protein (BCCP) and then the CO(2) group is transferred by the transcarboxylase to acetyl-CoA to form malonyl-CoA. This is Acetyl-coenzyme A carboxylase carboxyl transferase subunit beta, chloroplastic from Brassica napus (Rape).